Consider the following 381-residue polypeptide: Creatine kinase B-type (381 aa).

The Phosphagen kinase N-terminal domain occupies 11–98 (KMKYSVDDEY…FDPVIEDRHG (88 aa)). Val-72 is a creatine binding site. A Phosphagen kinase C-terminal domain is found at 125-367 (YVLSSRVRTG…KLLIEMEKRL (243 aa)). ATP is bound by residues 128–132 (SSRVR), Arg-130, Arg-132, and His-191. Residue Glu-232 coordinates creatine. An ATP-binding site is contributed by Arg-236. Thr-282 carries the post-translational modification Phosphothreonine; by autocatalysis. Position 285 (Ser-285) interacts with creatine. A Phosphoserine; by autocatalysis modification is found at Ser-285. Thr-289 is subject to Phosphothreonine; by autocatalysis. ATP is bound by residues Arg-292, Arg-320, 320 to 325 (RGTGGV), and Asp-335.

The protein belongs to the ATP:guanido phosphotransferase family. As to quaternary structure, dimer of identical or non-identical chains, which can be either B (brain type) or M (muscle type). With MM being the major form in skeletal muscle and myocardium, MB existing in myocardium, and BB existing in many tissues, especially brain. In terms of processing, ba-CK and Bb-CK are phosphorylated. Post-translationally, the N-terminus of BA-CK is blocked. Expressed in almost all tissues and found enriched in various region of the brain, retina, heart, gizzard, gut and sperm.

It localises to the cytoplasm. The protein localises to the cytosol. The protein resides in the mitochondrion. Its subcellular location is the cell membrane. The enzyme catalyses creatine + ATP = N-phosphocreatine + ADP + H(+). In terms of biological role, reversibly catalyzes the transfer of phosphate between ATP and various phosphogens (e.g. creatine phosphate). Creatine kinase isoenzymes play a central role in energy transduction in tissues with large, fluctuating energy demands, such as skeletal muscle, heart, brain and spermatozoa. In Gallus gallus (Chicken), this protein is Creatine kinase B-type.